A 110-amino-acid polypeptide reads, in one-letter code: N(4)-acetylcytidine amidohydrolase (110 aa).

One can recognise an ASCH domain in the interval 6–93; sequence TFFERFEQDI…IQEIYPGLEQ (88 aa). The active-site Proton acceptor is the Lys20. Thr23 functions as the Nucleophile in the catalytic mechanism. The active-site Proton donor is the Glu73.

It belongs to the N(4)-acetylcytidine amidohydrolase family.

It carries out the reaction N(4)-acetylcytidine + H2O = cytidine + acetate + H(+). The catalysed reaction is N(4)-acetyl-2'-deoxycytidine + H2O = 2'-deoxycytidine + acetate + H(+). It catalyses the reaction N(4)-acetylcytosine + H2O = cytosine + acetate + H(+). In terms of biological role, catalyzes the hydrolysis of N(4)-acetylcytidine (ac4C). The polypeptide is N(4)-acetylcytidine amidohydrolase (Shewanella sp. (strain ANA-3)).